The chain runs to 797 residues: Ribosome biogenesis protein BOP1 homolog (797 aa).

Disordered regions lie at residues 22 to 112 (LVPS…GGGP) and 149 to 177 (SICANTKPRAGPDPGSDSSEDERPNRNTV). Residues 61-73 (AGAAAAAVEGTAA) show a composition bias toward low complexity. The segment covering 74–87 (PEDEAADNSSEEDA) has biased composition (acidic residues). Over residues 90-112 (GSHGEGAGEGGGSGTWPGNGGGP) the composition is skewed to gly residues. 7 WD repeats span residues 462–502 (GHMG…CWRT), 504–544 (VLEG…EEAE), 581–623 (RLRF…SQNP), 626–664 (KNRGRVVRVAFHPTKPFFFVATQNHVRVYNLAKQALAKK), 667–706 (GGGGVLSCLALHPGGDHVLVGSDDKRVAWYDLDLSTKPYK), 710–749 (YHSAPPRAVAFHRSYPLFASAADDGTVQVFHGMVYADLLT), and 766–797 (TASEGVADCAFHPTQPWIFTAGADSKILLYCN).

The protein belongs to the WD repeat BOP1/ERB1 family.

It is found in the nucleus. Its subcellular location is the nucleolus. The protein localises to the nucleoplasm. In terms of biological role, required for maturation of ribosomal RNAs and formation of the large ribosomal subunit. The polypeptide is Ribosome biogenesis protein BOP1 homolog (Chlamydomonas reinhardtii (Chlamydomonas smithii)).